Here is a 174-residue protein sequence, read N- to C-terminus: MGAAGVLIGQGFDAHRFAPAGSGRELWIAGLYWPVPDSCSEADAARYEGIEGDSDGDVAAHALIDALLAAARLGDIGSLFGVGADAHGAGRHGIDMLQEVVAHLASNGYTPASASVAIIGNRPKIGTRRAEAEAALSAAVGCPVSVTATTTDHMGFTGRGEGIAAIANALVEKI.

3 residues coordinate a divalent metal cation: D13, H15, and H61. Position 13–15 (13–15) interacts with 4-CDP-2-C-methyl-D-erythritol 2-phosphate; that stretch reads DAH. Residues 75–77, 149–152, F156, and R159 contribute to the 4-CDP-2-C-methyl-D-erythritol 2-phosphate site; these read DIG and TTTD.

It belongs to the IspF family. Homotrimer. The cofactor is a divalent metal cation.

The enzyme catalyses 4-CDP-2-C-methyl-D-erythritol 2-phosphate = 2-C-methyl-D-erythritol 2,4-cyclic diphosphate + CMP. The protein operates within isoprenoid biosynthesis; isopentenyl diphosphate biosynthesis via DXP pathway; isopentenyl diphosphate from 1-deoxy-D-xylulose 5-phosphate: step 4/6. Its function is as follows. Involved in the biosynthesis of isopentenyl diphosphate (IPP) and dimethylallyl diphosphate (DMAPP), two major building blocks of isoprenoid compounds. Catalyzes the conversion of 4-diphosphocytidyl-2-C-methyl-D-erythritol 2-phosphate (CDP-ME2P) to 2-C-methyl-D-erythritol 2,4-cyclodiphosphate (ME-CPP) with a corresponding release of cytidine 5-monophosphate (CMP). This chain is 2-C-methyl-D-erythritol 2,4-cyclodiphosphate synthase, found in Bifidobacterium longum subsp. infantis (strain ATCC 15697 / DSM 20088 / JCM 1222 / NCTC 11817 / S12).